We begin with the raw amino-acid sequence, 492 residues long: RNA helicase CrhR (492 aa).

The Q motif motif lies at 7-35 (STFADLGLSEKRCQLLADIGFEAPTQIQT). A Helicase ATP-binding domain is found at 38-207 (IPLLLSGRDM…NQFLNDPALV (170 aa)). 51–58 (SQTGTGKT) is a binding site for ATP. The short motif at 155 to 158 (DEAD) is the DEAD box element. The Helicase C-terminal domain maps to 234–379 (KALQPILEME…VCTIPNRSQV (146 aa)). The interval 451-492 (VLRRGRNAGGGQNKSGGGYQGKPGKPRRSSGGRRPAYSDRQQ) is disordered. Positions 457–471 (NAGGGQNKSGGGYQG) are enriched in gly residues.

Belongs to the DEAD box helicase family.

It is found in the cytoplasm. The protein localises to the cell inner membrane. It localises to the cellular thylakoid membrane. The enzyme catalyses ATP + H2O = ADP + phosphate + H(+). Helicase inhibited by the slowly-hydrolyzing ATP analog ATP-gamma-S. Protein is rapidly degraded upon shifting from 20 to 30 degrees Celsius, the degradation machinery is only transiently present in cells grown at 30 degrees Celsius, is inhibited by commercial protease inhibitors and requires full-length protein expression (the N-terminal fragment does not induce proteolysis although it can be degraded by wild-type extract). Its function is as follows. An ATP-dependent bidirectional RNA helicase with RNA-dependent ATPase activity; does not unwind dsDNA, uses only (d)ATP. Also has ATP-dependent RNA annealing activity; concurrent annealing and helicase activity promote strand-exchange activity. In vitro has low helicase processivity, annealing processivity is probably higher. Required for correct cold adaptation, probably by aiding translation of mRNAs required for photosynthesis and electron transport. Probably regulates the cold-shock-inducible expression of the GroESL chaperones. May partially regulate its own expression at both the transcriptional and post-transcriptional level (experiments used a construct expressing a 25 kDa trunacted protein which might have dominant-negative effects); is probably not directly involved in the pathway responsible for mRNA degradation. In Synechocystis sp. (strain ATCC 27184 / PCC 6803 / Kazusa), this protein is RNA helicase CrhR.